Consider the following 116-residue polypeptide: MDKKTSRLRRALRARKKIQELGVNRLVVHRTPRHTYAQVISPENVVLAAASTAEKAVTEQLKYTGNVDAAKVVGKTVAERAIEKGVAVVAFDRSGFKYHGRVAALADAAREAGLKF.

It belongs to the universal ribosomal protein uL18 family. As to quaternary structure, part of the 50S ribosomal subunit; part of the 5S rRNA/L5/L18/L25 subcomplex. Contacts the 5S and 23S rRNAs.

Functionally, this is one of the proteins that bind and probably mediate the attachment of the 5S RNA into the large ribosomal subunit, where it forms part of the central protuberance. This is Large ribosomal subunit protein uL18 from Shewanella halifaxensis (strain HAW-EB4).